Reading from the N-terminus, the 529-residue chain is Structure-specific endonuclease subunit SLX1 homolog 1 (529 aa).

One can recognise a GIY-YIG domain in the interval 4 to 89 (RFHCVYLLTS…PTKSTRLKTQ (86 aa)). Residues 231-364 (CALCSLPLRS…PCQPCPCPLC (134 aa)) form an SLX1-type zinc finger. Disordered regions lie at residues 275-305 (VTMGQSTRNERSGEYSNKIKDDSNDGTMDAH), 409-437 (NSSLTERKSRRKATPALGQKRNRGEYCGD), and 470-501 (SVSLPPSRDEGYACDSSRRGVGGSKHTTRMTD). A compositionally biased stretch (basic and acidic residues) spans 282 to 297 (RNERSGEYSNKIKDDS).

It belongs to the SLX1 family. As to quaternary structure, forms a heterodimer with a member of the SLX4 family. A divalent metal cation is required as a cofactor.

The protein resides in the nucleus. Catalytic subunit of a heterodimeric structure-specific endonuclease that resolves DNA secondary structures generated during DNA repair and recombination. Has endonuclease activity towards branched DNA substrates, introducing single-strand cuts in duplex DNA close to junctions with ss-DNA. In Trypanosoma cruzi (strain CL Brener), this protein is Structure-specific endonuclease subunit SLX1 homolog 1.